Here is a 556-residue protein sequence, read N- to C-terminus: Arginine--tRNA ligase (556 aa).

The 'HIGH' region motif lies at 132–142 (ANPTGDLHLGH).

Belongs to the class-I aminoacyl-tRNA synthetase family. As to quaternary structure, monomer.

The protein resides in the cytoplasm. It catalyses the reaction tRNA(Arg) + L-arginine + ATP = L-arginyl-tRNA(Arg) + AMP + diphosphate. The protein is Arginine--tRNA ligase (argS) of Bacillus subtilis (strain 168).